A 272-amino-acid polypeptide reads, in one-letter code: MNRIDKTLEKLKANRKKMLSPYITAGDPYPELTVSLMHQLVKSGADVLELGIPFSDPMAEGPVIQRAMERALAHSIHCDDVLNMVRQFRKTDTETPVILMGYLNPIEQYGYDLFAQQAVEAGVDGTILVDLPPEEADGVSRVWQKHGLYSIYLCSPTTSAERMNYINQHANGYLYYVSLKGVTGSDALKLPELKAQYLQRKAQSKLPLMVGFGIKTPEMAAQVAEFADGVIVGAALINEIIEAYEAKKDPLQASGALLSSMRQAIDNIGSMV.

Active-site proton acceptor residues include Glu49 and Glu60.

Belongs to the TrpA family. As to quaternary structure, tetramer of two alpha and two beta chains.

It catalyses the reaction (1S,2R)-1-C-(indol-3-yl)glycerol 3-phosphate + L-serine = D-glyceraldehyde 3-phosphate + L-tryptophan + H2O. Its pathway is amino-acid biosynthesis; L-tryptophan biosynthesis; L-tryptophan from chorismate: step 5/5. In terms of biological role, the alpha subunit is responsible for the aldol cleavage of indoleglycerol phosphate to indole and glyceraldehyde 3-phosphate. This is Tryptophan synthase alpha chain from Legionella pneumophila subsp. pneumophila (strain Philadelphia 1 / ATCC 33152 / DSM 7513).